Reading from the N-terminus, the 477-residue chain is Mannitol 2-dehydrogenase (477 aa).

19 to 30 is a binding site for NAD(+); that stretch reads IVHIGVGNFHRA.

It belongs to the mannitol dehydrogenase family. In terms of assembly, monomer.

The enzyme catalyses D-mannitol + NAD(+) = D-fructose + NADH + H(+). This chain is Mannitol 2-dehydrogenase (mtlK), found in Cereibacter sphaeroides (Rhodobacter sphaeroides).